The sequence spans 189 residues: NADH-quinone oxidoreductase subunit B (189 aa).

The [4Fe-4S] cluster site is built by Cys-39, Cys-40, Cys-104, and Cys-135.

This sequence belongs to the complex I 20 kDa subunit family. As to quaternary structure, NDH-1 is composed of 14 different subunits. Subunits NuoB, C, D, E, F, and G constitute the peripheral sector of the complex. Requires [4Fe-4S] cluster as cofactor.

It is found in the cell inner membrane. It catalyses the reaction a quinone + NADH + 5 H(+)(in) = a quinol + NAD(+) + 4 H(+)(out). Its function is as follows. NDH-1 shuttles electrons from NADH, via FMN and iron-sulfur (Fe-S) centers, to quinones in the respiratory chain. The immediate electron acceptor for the enzyme in this species is believed to be a menaquinone. Couples the redox reaction to proton translocation (for every two electrons transferred, four hydrogen ions are translocated across the cytoplasmic membrane), and thus conserves the redox energy in a proton gradient. The sequence is that of NADH-quinone oxidoreductase subunit B from Pelodictyon phaeoclathratiforme (strain DSM 5477 / BU-1).